Consider the following 162-residue polypeptide: Cyclic pyranopterin monophosphate synthase (162 aa).

Substrate is bound by residues 75 to 77 (LCH) and 113 to 114 (ME). Asp128 is an active-site residue.

Belongs to the MoaC family. In terms of assembly, homohexamer; trimer of dimers.

It carries out the reaction (8S)-3',8-cyclo-7,8-dihydroguanosine 5'-triphosphate = cyclic pyranopterin phosphate + diphosphate. It participates in cofactor biosynthesis; molybdopterin biosynthesis. Catalyzes the conversion of (8S)-3',8-cyclo-7,8-dihydroguanosine 5'-triphosphate to cyclic pyranopterin monophosphate (cPMP). The chain is Cyclic pyranopterin monophosphate synthase from Burkholderia ambifaria (strain ATCC BAA-244 / DSM 16087 / CCUG 44356 / LMG 19182 / AMMD) (Burkholderia cepacia (strain AMMD)).